Reading from the N-terminus, the 192-residue chain is Fumarylpyruvate hydrolase (192 aa).

Glutamate 41, glutamate 43, and aspartate 72 together coordinate a divalent metal cation.

It belongs to the FAH family. Requires Mg(2+) as cofactor. Mn(2+) serves as cofactor.

The enzyme catalyses 3-fumarylpyruvate + H2O = fumarate + pyruvate + H(+). It participates in aromatic compound metabolism; naphthalene degradation. In terms of biological role, involved in the catabolism of gentisate (2,5-dihydroxybenzoate) a key intermediates in the aerobic pathways for the metabolism of a large number of aromatic compoun such as naphthalene. Catalyzes the hydrolytic cleavage of fumarylpyruvate to form fumarate and pyruvate. In Ralstonia sp, this protein is Fumarylpyruvate hydrolase.